Here is a 113-residue protein sequence, read N- to C-terminus: Hydrogenase maturation factor HypA (113 aa).

Residue His2 coordinates Ni(2+). Zn(2+) is bound by residues Cys73, Cys76, Cys89, and Cys92.

It belongs to the HypA/HybF family.

In terms of biological role, involved in the maturation of [NiFe] hydrogenases. Required for nickel insertion into the metal center of the hydrogenase. The polypeptide is Hydrogenase maturation factor HypA (Cereibacter sphaeroides (strain KD131 / KCTC 12085) (Rhodobacter sphaeroides)).